Reading from the N-terminus, the 600-residue chain is Aspartate--tRNA(Asp/Asn) ligase (600 aa).

E187 is an L-aspartate binding site. The aspartate stretch occupies residues 211–214 (QIFK). Residues R233 and H463 each contribute to the L-aspartate site. 233–235 (RDE) contacts ATP. E497 contributes to the ATP binding site. R504 is a binding site for L-aspartate. 549–552 (GIDR) contacts ATP.

Belongs to the class-II aminoacyl-tRNA synthetase family. Type 1 subfamily. Homodimer.

The protein localises to the cytoplasm. The enzyme catalyses tRNA(Asx) + L-aspartate + ATP = L-aspartyl-tRNA(Asx) + AMP + diphosphate. Its function is as follows. Aspartyl-tRNA synthetase with relaxed tRNA specificity since it is able to aspartylate not only its cognate tRNA(Asp) but also tRNA(Asn). Reaction proceeds in two steps: L-aspartate is first activated by ATP to form Asp-AMP and then transferred to the acceptor end of tRNA(Asp/Asn). The polypeptide is Aspartate--tRNA(Asp/Asn) ligase (Wolbachia sp. subsp. Brugia malayi (strain TRS)).